A 339-amino-acid polypeptide reads, in one-letter code: Homocysteine S-methyltransferase 2 (339 aa).

The Hcy-binding domain occupies 12–326 (AVRRWVDAAG…NTIRAIHRTL (315 aa)). Residues C244, C311, and C312 each coordinate Zn(2+).

In terms of assembly, monomer. Requires Zn(2+) as cofactor.

It catalyses the reaction S-methyl-L-methionine + L-homocysteine = 2 L-methionine + H(+). Its function is as follows. Catalyzes methyl transfer from S-methylmethionine (SMM) to adenosyl-L-homocysteine (AdoMet). SMM degradation (by HMT-1, HMT-2, HMT-3 and HMT-4) and biosynthesis (by MMT1) constitute the SMM cycle in plants, which is probably required to achieve short term control of AdoMet level. The polypeptide is Homocysteine S-methyltransferase 2 (HMT-2) (Zea mays (Maize)).